The sequence spans 239 residues: Ribonuclease 3 (239 aa).

Residues 11 to 133 (HTAIQKKLGY…MFAAVSFDAD (123 aa)) form the RNase III domain. A Mg(2+)-binding site is contributed by Glu-46. Residue Asp-50 is part of the active site. Residues Asp-119 and Glu-122 each coordinate Mg(2+). Residue Glu-122 is part of the active site. The DRBM domain maps to 160 to 230 (DGKTALQEAL…AKEALKWLEE (71 aa)).

It belongs to the ribonuclease III family. Homodimer. It depends on Mg(2+) as a cofactor.

It is found in the cytoplasm. The catalysed reaction is Endonucleolytic cleavage to 5'-phosphomonoester.. Its function is as follows. Digests double-stranded RNA. Involved in the processing of primary rRNA transcript to yield the immediate precursors to the large and small rRNAs (23S and 16S). Processes some mRNAs, and tRNAs when they are encoded in the rRNA operon. Processes pre-crRNA and tracrRNA of type II CRISPR loci if present in the organism. This Neisseria gonorrhoeae (strain NCCP11945) protein is Ribonuclease 3.